The chain runs to 246 residues: Flavin-dependent thymidylate synthase (246 aa).

The ThyX domain occupies 17 to 241 (ITVELVKSAA…PLTHAAFNAN (225 aa)). FAD contacts are provided by residues serine 69, 92-94 (RHR), and glutamate 101. DUMP-binding positions include 89–92 (EFMR), 101–105 (EESGR), and arginine 173. Positions 92 to 103 (RHRVGWSYNEES) match the ThyX motif motif. Residues 189-191 (NAR) and histidine 195 each bind FAD. A dUMP-binding site is contributed by arginine 200. Catalysis depends on arginine 200, which acts as the Involved in ionization of N3 of dUMP, leading to its activation.

This sequence belongs to the thymidylate synthase ThyX family. As to quaternary structure, homotetramer. It depends on FAD as a cofactor.

The catalysed reaction is dUMP + (6R)-5,10-methylene-5,6,7,8-tetrahydrofolate + NADPH + H(+) = dTMP + (6S)-5,6,7,8-tetrahydrofolate + NADP(+). Its pathway is pyrimidine metabolism; dTTP biosynthesis. Its function is as follows. Catalyzes the reductive methylation of 2'-deoxyuridine-5'-monophosphate (dUMP) to 2'-deoxythymidine-5'-monophosphate (dTMP) while utilizing 5,10-methylenetetrahydrofolate (mTHF) as the methyl donor, and NADPH and FADH(2) as the reductant. The chain is Flavin-dependent thymidylate synthase from Streptomyces coelicolor (strain ATCC BAA-471 / A3(2) / M145).